Here is a 240-residue protein sequence, read N- to C-terminus: Ribonuclease T2 (240 aa).

Residues 1–19 form the signal peptide; the sequence is MRFIAFAVIFSAVYLCSSA. A disulfide bridge links cysteine 41 with cysteine 46. Histidine 56 is an active-site residue. Disulfide bonds link cysteine 66/cysteine 110, cysteine 173/cysteine 227, and cysteine 191/cysteine 201. Residues asparagine 67 and asparagine 73 are each glycosylated (N-linked (GlcNAc...) asparagine). Catalysis depends on residues glutamate 103 and histidine 107.

It belongs to the RNase T2 family. As to expression, ubiquitous.

Its subcellular location is the lysosome lumen. It localises to the endoplasmic reticulum lumen. It is found in the secreted. The enzyme catalyses a ribonucleotidyl-ribonucleotide-RNA + H2O = a 3'-end 3'-phospho-ribonucleotide-RNA + a 5'-end dephospho-ribonucleoside-RNA + H(+). In terms of biological role, has ribonuclease activity, with higher activity at acidic pH. Probably is involved in lysosomal degradation of ribosomal RNA. In Danio rerio (Zebrafish), this protein is Ribonuclease T2 (rnaset2).